The following is a 169-amino-acid chain: Lipoprotein signal peptidase (169 aa).

4 consecutive transmembrane segments (helical) span residues 10–30, 40–60, 68–88, and 94–114; these read LPWL…KAFF, IVVI…AAFS, WQRW…VVWL, and GETW…GNLY. Active-site residues include Asp124 and Asp143. The chain crosses the membrane as a helical span at residues 135-155; that stretch reads YFPAFNLADSAITVGAVMLAL.

This sequence belongs to the peptidase A8 family.

The protein localises to the cell inner membrane. The enzyme catalyses Release of signal peptides from bacterial membrane prolipoproteins. Hydrolyzes -Xaa-Yaa-Zaa-|-(S,diacylglyceryl)Cys-, in which Xaa is hydrophobic (preferably Leu), and Yaa (Ala or Ser) and Zaa (Gly or Ala) have small, neutral side chains.. It functions in the pathway protein modification; lipoprotein biosynthesis (signal peptide cleavage). Its function is as follows. This protein specifically catalyzes the removal of signal peptides from prolipoproteins. This is Lipoprotein signal peptidase from Pseudomonas aeruginosa (strain UCBPP-PA14).